Here is a 145-residue protein sequence, read N- to C-terminus: D-aminoacyl-tRNA deacylase (145 aa).

The Gly-cisPro motif, important for rejection of L-amino acids motif lies at 137–138 (GP).

It belongs to the DTD family. In terms of assembly, homodimer.

It is found in the cytoplasm. It carries out the reaction glycyl-tRNA(Ala) + H2O = tRNA(Ala) + glycine + H(+). The catalysed reaction is a D-aminoacyl-tRNA + H2O = a tRNA + a D-alpha-amino acid + H(+). Functionally, an aminoacyl-tRNA editing enzyme that deacylates mischarged D-aminoacyl-tRNAs. Also deacylates mischarged glycyl-tRNA(Ala), protecting cells against glycine mischarging by AlaRS. Acts via tRNA-based rather than protein-based catalysis; rejects L-amino acids rather than detecting D-amino acids in the active site. By recycling D-aminoacyl-tRNA to D-amino acids and free tRNA molecules, this enzyme counteracts the toxicity associated with the formation of D-aminoacyl-tRNA entities in vivo and helps enforce protein L-homochirality. In Shewanella putrefaciens (strain CN-32 / ATCC BAA-453), this protein is D-aminoacyl-tRNA deacylase.